Consider the following 246-residue polypeptide: 3-deoxy-manno-octulosonate cytidylyltransferase (246 aa).

The protein belongs to the KdsB family.

The protein resides in the cytoplasm. The catalysed reaction is 3-deoxy-alpha-D-manno-oct-2-ulosonate + CTP = CMP-3-deoxy-beta-D-manno-octulosonate + diphosphate. Its pathway is nucleotide-sugar biosynthesis; CMP-3-deoxy-D-manno-octulosonate biosynthesis; CMP-3-deoxy-D-manno-octulosonate from 3-deoxy-D-manno-octulosonate and CTP: step 1/1. The protein operates within bacterial outer membrane biogenesis; lipopolysaccharide biosynthesis. Functionally, activates KDO (a required 8-carbon sugar) for incorporation into bacterial lipopolysaccharide in Gram-negative bacteria. The protein is 3-deoxy-manno-octulosonate cytidylyltransferase of Chloroherpeton thalassium (strain ATCC 35110 / GB-78).